A 311-amino-acid chain; its full sequence is Methionyl-tRNA formyltransferase (311 aa).

110–113 (SLLP) serves as a coordination point for (6S)-5,6,7,8-tetrahydrofolate.

Belongs to the Fmt family.

It catalyses the reaction L-methionyl-tRNA(fMet) + (6R)-10-formyltetrahydrofolate = N-formyl-L-methionyl-tRNA(fMet) + (6S)-5,6,7,8-tetrahydrofolate + H(+). Attaches a formyl group to the free amino group of methionyl-tRNA(fMet). The formyl group appears to play a dual role in the initiator identity of N-formylmethionyl-tRNA by promoting its recognition by IF2 and preventing the misappropriation of this tRNA by the elongation apparatus. This is Methionyl-tRNA formyltransferase from Streptococcus pyogenes serotype M3 (strain ATCC BAA-595 / MGAS315).